The primary structure comprises 158 residues: 6,7-dimethyl-8-ribityllumazine synthase (158 aa).

5-amino-6-(D-ribitylamino)uracil contacts are provided by residues Phe-24, 58-60 (AFE), and 82-84 (AVI). 87–88 (GT) is a binding site for (2S)-2-hydroxy-3-oxobutyl phosphate. His-90 acts as the Proton donor in catalysis. 5-amino-6-(D-ribitylamino)uracil is bound at residue Phe-115. Arg-129 serves as a coordination point for (2S)-2-hydroxy-3-oxobutyl phosphate.

The protein belongs to the DMRL synthase family. In terms of assembly, forms an icosahedral capsid composed of 60 subunits, arranged as a dodecamer of pentamers.

The enzyme catalyses (2S)-2-hydroxy-3-oxobutyl phosphate + 5-amino-6-(D-ribitylamino)uracil = 6,7-dimethyl-8-(1-D-ribityl)lumazine + phosphate + 2 H2O + H(+). It participates in cofactor biosynthesis; riboflavin biosynthesis; riboflavin from 2-hydroxy-3-oxobutyl phosphate and 5-amino-6-(D-ribitylamino)uracil: step 1/2. In terms of biological role, catalyzes the formation of 6,7-dimethyl-8-ribityllumazine by condensation of 5-amino-6-(D-ribitylamino)uracil with 3,4-dihydroxy-2-butanone 4-phosphate. This is the penultimate step in the biosynthesis of riboflavin. The chain is 6,7-dimethyl-8-ribityllumazine synthase from Azotobacter vinelandii (strain DJ / ATCC BAA-1303).